Reading from the N-terminus, the 658-residue chain is Katanin p80 WD40 repeat-containing subunit B1 (658 aa).

The segment at 1-284 (MATPVVTKTA…VADLAICNDQ (284 aa)) is interaction with dynein. The segment at 1–300 (MATPVVTKTA…SQSNVSSYVV (300 aa)) is interaction with centrosomes. WD repeat units follow at residues 18–58 (AHAS…CIMS), 61–100 (GHTS…ILRT), 103–142 (GHKA…CVFR), 145–184 (GHSQ…MMSE), 187–226 (GHTG…VVSC), and 229–269 (GEPG…DVVL). Residues 285–437 (LIGVAFSQSN…LPQLPVPNLE (153 aa)) are interaction with PAFAH1B1. Polar residues predominate over residues 311–329 (VTQDPVQANQPLTQQTPNP). Disordered regions lie at residues 311 to 419 (VTQD…EVSK) and 434 to 458 (PNLE…PDII). Over residues 352-374 (HNSESERRSPSSEDDRDERESRA) the composition is skewed to basic and acidic residues. At T395 the chain carries Phosphothreonine. Residues 436-658 (LEVPARPSVM…ELHLLMASLD (223 aa)) form an interaction with KATNA1 and NDEL1 region.

The protein belongs to the WD repeat KATNB1 family. Interacts with KATNA1. This interaction enhances the microtubule binding and severing activity of KATNA1 and also targets this activity to the centrosome. This interaction is weakly competed by KATNBL1 which has a lower affinity for it. Interacts with ASPM; the katanin complex formation KATNA1:KATNB1 is required for the association of ASPM. Interacts with dynein, microtubules, NDEL1 and PAFAH1B1. Interacts with KATNAL1; this interaction is weakly competed by KATNBL1 which has a lower affinity for it. Interacts with CAMSAP2 and CAMSAP3; leading to regulate the length of CAMSAP-decorated microtubule stretches.

It localises to the cytoplasm. The protein localises to the cytoskeleton. The protein resides in the microtubule organizing center. It is found in the centrosome. Its subcellular location is the spindle pole. It localises to the spindle. In terms of biological role, participates in a complex which severs microtubules in an ATP-dependent manner. May act to target the enzymatic subunit of this complex to sites of action such as the centrosome. Microtubule severing may promote rapid reorganization of cellular microtubule arrays and the release of microtubules from the centrosome following nucleation. Microtubule release from the mitotic spindle poles may allow depolymerization of the microtubule end proximal to the spindle pole, leading to poleward microtubule flux and poleward motion of chromosome. The function in regulating microtubule dynamics at spindle poles seems to depend on the association of the katanin KATNA1:KATNB1 complex with ASPM which recruits it to microtubules. Reversely KATNA1:KATNB1 can enhance ASPM blocking activity on microtubule minus-end growth. Microtubule release within the cell body of neurons may be required for their transport into neuronal processes by microtubule-dependent motor proteins. This transport is required for axonal growth. This chain is Katanin p80 WD40 repeat-containing subunit B1 (Katnb1), found in Mus musculus (Mouse).